Reading from the N-terminus, the 151-residue chain is Putative esterase VNG_1336C (151 aa).

Belongs to the thioesterase PaaI family.

This is Putative esterase VNG_1336C from Halobacterium salinarum (strain ATCC 700922 / JCM 11081 / NRC-1) (Halobacterium halobium).